Consider the following 140-residue polypeptide: Small ribosomal subunit protein uS9 (140 aa).

This sequence belongs to the universal ribosomal protein uS9 family.

This chain is Small ribosomal subunit protein uS9, found in Desulfurococcus amylolyticus (strain DSM 18924 / JCM 16383 / VKM B-2413 / 1221n) (Desulfurococcus kamchatkensis).